Here is a 144-residue protein sequence, read N- to C-terminus: Large ribosomal subunit protein uL15 (144 aa).

The disordered stretch occupies residues Met1 to Lys58. Gly residues predominate over residues Arg21–Ala31.

It belongs to the universal ribosomal protein uL15 family. In terms of assembly, part of the 50S ribosomal subunit.

In terms of biological role, binds to the 23S rRNA. The protein is Large ribosomal subunit protein uL15 of Psychromonas ingrahamii (strain DSM 17664 / CCUG 51855 / 37).